We begin with the raw amino-acid sequence, 161 residues long: Ribosome maturation factor RimP (161 aa).

The protein belongs to the RimP family.

It localises to the cytoplasm. Its function is as follows. Required for maturation of 30S ribosomal subunits. In Desulfosudis oleivorans (strain DSM 6200 / JCM 39069 / Hxd3) (Desulfococcus oleovorans), this protein is Ribosome maturation factor RimP.